Here is a 207-residue protein sequence, read N- to C-terminus: 2,3-bisphosphoglycerate-dependent phosphoglycerate mutase (207 aa).

Substrate is bound by residues 10 to 17 (RHGQSEWN), 23 to 24 (TG), R62, 89 to 92 (ERDY), K100, 116 to 117 (RR), and 160 to 161 (GN). H11 acts as the Tele-phosphohistidine intermediate in catalysis. The Proton donor/acceptor role is filled by E89.

Belongs to the phosphoglycerate mutase family. BPG-dependent PGAM subfamily. As to quaternary structure, homodimer.

It carries out the reaction (2R)-2-phosphoglycerate = (2R)-3-phosphoglycerate. It functions in the pathway carbohydrate degradation; glycolysis; pyruvate from D-glyceraldehyde 3-phosphate: step 3/5. In terms of biological role, catalyzes the interconversion of 2-phosphoglycerate and 3-phosphoglycerate. This chain is 2,3-bisphosphoglycerate-dependent phosphoglycerate mutase, found in Bradyrhizobium sp. (strain ORS 278).